Here is a 513-residue protein sequence, read N- to C-terminus: NAD(P)H-quinone oxidoreductase subunit 2, chloroplastic (513 aa).

A run of 14 helical transmembrane segments spans residues 11–31 (NLIT…ILMI), 38–58 (SVWL…ILLF), 78–98 (GFTI…IPLS), 112–132 (FLIL…ANDL), 133–153 (VTIF…AGQA), 167–187 (LLMG…LYGL), 219–239 (FGAL…GFKI), 256–276 (PTPV…ALAT), 290–310 (WHIV…LIAA), 318–338 (MLAY…LVGN), 348–368 (YLLI…IFGL), 389–409 (AFAL…AGFF), 422–442 (HLYL…YYYL), and 478–498 (LGLT…NPLI).

This sequence belongs to the complex I subunit 2 family. In terms of assembly, NDH is composed of at least 16 different subunits, 5 of which are encoded in the nucleus.

It localises to the plastid. It is found in the chloroplast thylakoid membrane. The enzyme catalyses a plastoquinone + NADH + (n+1) H(+)(in) = a plastoquinol + NAD(+) + n H(+)(out). The catalysed reaction is a plastoquinone + NADPH + (n+1) H(+)(in) = a plastoquinol + NADP(+) + n H(+)(out). In terms of biological role, NDH shuttles electrons from NAD(P)H:plastoquinone, via FMN and iron-sulfur (Fe-S) centers, to quinones in the photosynthetic chain and possibly in a chloroplast respiratory chain. The immediate electron acceptor for the enzyme in this species is believed to be plastoquinone. Couples the redox reaction to proton translocation, and thus conserves the redox energy in a proton gradient. This Staurastrum punctulatum (Green alga) protein is NAD(P)H-quinone oxidoreductase subunit 2, chloroplastic.